A 156-amino-acid polypeptide reads, in one-letter code: Cyanate hydratase (156 aa).

Residues arginine 96, glutamate 99, and serine 122 contribute to the active site.

It belongs to the cyanase family.

It catalyses the reaction cyanate + hydrogencarbonate + 3 H(+) = NH4(+) + 2 CO2. Functionally, catalyzes the reaction of cyanate with bicarbonate to produce ammonia and carbon dioxide. This is Cyanate hydratase from Escherichia coli O9:H4 (strain HS).